The primary structure comprises 279 residues: Acetyl-coenzyme A carboxylase carboxyl transferase subunit beta (279 aa).

In terms of domain architecture, CoA carboxyltransferase N-terminal spans 27–279 (LFLACPYCGT…IVKLHHRTEI (253 aa)). Cys31, Cys34, Cys49, and Cys52 together coordinate Zn(2+). The C4-type zinc-finger motif lies at 31–52 (CPYCGTQMYNKQLGDYRVCAKC).

Belongs to the AccD/PCCB family. Acetyl-CoA carboxylase is a heterohexamer composed of biotin carboxyl carrier protein (AccB), biotin carboxylase (AccC) and two subunits each of ACCase subunit alpha (AccA) and ACCase subunit beta (AccD). It depends on Zn(2+) as a cofactor.

Its subcellular location is the cytoplasm. It catalyses the reaction N(6)-carboxybiotinyl-L-lysyl-[protein] + acetyl-CoA = N(6)-biotinyl-L-lysyl-[protein] + malonyl-CoA. The protein operates within lipid metabolism; malonyl-CoA biosynthesis; malonyl-CoA from acetyl-CoA: step 1/1. Component of the acetyl coenzyme A carboxylase (ACC) complex. Biotin carboxylase (BC) catalyzes the carboxylation of biotin on its carrier protein (BCCP) and then the CO(2) group is transferred by the transcarboxylase to acetyl-CoA to form malonyl-CoA. The chain is Acetyl-coenzyme A carboxylase carboxyl transferase subunit beta from Leuconostoc citreum (strain KM20).